The following is an 89-amino-acid chain: Putative regulatory protein CYB_0055 (89 aa).

It belongs to the RemA family.

This chain is Putative regulatory protein CYB_0055, found in Synechococcus sp. (strain JA-2-3B'a(2-13)) (Cyanobacteria bacterium Yellowstone B-Prime).